Consider the following 611-residue polypeptide: Probable Xaa-Pro aminopeptidase P (611 aa).

The Mn(2+) site is built by Asp408, Asp419, Glu517, and Glu531.

This sequence belongs to the peptidase M24B family. Requires Mn(2+) as cofactor.

It carries out the reaction Release of any N-terminal amino acid, including proline, that is linked to proline, even from a dipeptide or tripeptide.. Its function is as follows. Catalyzes the removal of a penultimate prolyl residue from the N-termini of peptides. This is Probable Xaa-Pro aminopeptidase P (AMPP) from Coccidioides posadasii (strain RMSCC 757 / Silveira) (Valley fever fungus).